A 176-amino-acid chain; its full sequence is 3-hydroxyanthranilate 3,4-dioxygenase (176 aa).

Arginine 44 provides a ligand contact to O2. Histidine 48, glutamate 54, and histidine 92 together coordinate Fe cation. Glutamate 54 contacts substrate. The substrate site is built by arginine 96 and glutamate 106. Cysteine 121, cysteine 124, cysteine 158, and cysteine 161 together coordinate Fe cation.

This sequence belongs to the 3-HAO family. Homodimer. It depends on Fe(2+) as a cofactor.

The enzyme catalyses 3-hydroxyanthranilate + O2 = (2Z,4Z)-2-amino-3-carboxymuconate 6-semialdehyde. It participates in cofactor biosynthesis; NAD(+) biosynthesis; quinolinate from L-kynurenine: step 3/3. Functionally, catalyzes the oxidative ring opening of 3-hydroxyanthranilate to 2-amino-3-carboxymuconate semialdehyde, which spontaneously cyclizes to quinolinate. The sequence is that of 3-hydroxyanthranilate 3,4-dioxygenase from Xanthomonas campestris pv. campestris (strain 8004).